The following is a 619-amino-acid chain: MELTSEEYEELRGLLGTPDIGNADTLKKAFLKACKVHHPDKGGNEEAMKRLLYLYNKAKIAASATTSQVPEYGTSQWEQWWEEFNQGFDEQDLHCDEELEPSDNEEENPAGSQAPGSQATPPKKPRTSPDFPEVLKEYVSNALFTNRTYNCFIIFTTAEKGKELYPCIQAAYKCTFIALYMYNGDSVLYIITVGKHRVNAMENLCSKKCTVSFLQAKGVLKPQEAYNVCCTFELISQNIQGGLPSSFFNPVQEEEKSVNWKLISEFACSIKCTDPLLLMALYLEFTTAPEACKVCDNPRRLEHRRHHTKDHTLNALLFQDSKTQKTICNQACDTVLAKRRLDMKTLTRNELLVQRWQGLFQEMEDLFGARGEEHLAHRMAAVMWLNALHPNMPDVIFNYIKMVVENKPKQRYLLLKGPVNCGKTTVAAGLIGLCGGAYLNINCPPERLAFELGMAIDQFTVVFEDVKGKKSSKSSLQTGIGFENLDNLRDHLDGAVPVNLERKHQNKVTQIFPPGIVTCNEYDIPLTVKIRMYQKVELLHNYNLYKSLKNTEEVGKKRYLQSGITWLLLLIYFRSVDDFTEKLQECVVKWKERIETEVGDMWLLTMKENIEQGKNILEK.

One can recognise a J domain in the interval 10–73; that stretch reads ELRGLLGTPD…ATTSQVPEYG (64 aa). Residues 93 to 97 carry the LXCXE motif motif; that stretch reads LHCDE. Residues 98–108 show a composition bias toward acidic residues; it reads ELEPSDNEEEN. Residues 98 to 131 are disordered; the sequence is ELEPSDNEEENPAGSQAPGSQATPPKKPRTSPDF. Residue serine 102 is modified to Phosphoserine; by host. A compositionally biased stretch (polar residues) spans 110 to 120; sequence AGSQAPGSQAT. Threonine 120 carries the post-translational modification Phosphothreonine; by host. The short motif at 121–128 is the Nuclear localization signal element; the sequence is PPKKPRTS. Residues 132-245 constitute a DNA-binding region (T-ag OBD); the sequence is PEVLKEYVSN…SQNIQGGLPS (114 aa). The T-ag D1-type zinc finger occupies 255-348; it reads EKSVNWKLIS…RRLDMKTLTR (94 aa). Residues cysteine 292, cysteine 295, histidine 303, and histidine 307 each coordinate Zn(2+). In terms of domain architecture, SF3 helicase spans 391-586; it reads NMPDVIFNYI…DDFTEKLQEC (196 aa). 417–424 contributes to the ATP binding site; that stretch reads GPVNCGKT.

In terms of assembly, forms homohexamers in the presence of ATP. Interacts with host HDAC1. Interacts (via LXCXE domain) with host RB1; the interaction induces the aberrant dissociation of RB1-E2F1 complex thereby disrupting RB1's activity. Interacts (via LXCXE domain) with host pRB-related proteins RBL1 and RBL2. Interacts (via C-terminus) with host TOP1 and POLA1 allowing DNA replication. Interacts with host TP53, inhibiting TP53 binding to DNA. Interacts with host preinitiation complex components TBP, TFIIA and TFIID to regulate transcription initiation. It depends on Mg(2+) as a cofactor. Post-translationally, phosphorylated on both serine and threonine residues. Small t antigen inhibits the dephosphorylation by the AC form of PP2A. O-Glycosylated near the C-terminal region. In terms of processing, acetylated by CBP in a TP53-dependent manner.

The protein resides in the host nucleus. The catalysed reaction is Couples ATP hydrolysis with the unwinding of duplex DNA by translocating in the 3'-5' direction.. It carries out the reaction ATP + H2O = ADP + phosphate + H(+). In terms of biological role, isoform large T antigen is a key early protein essential for both driving viral replication and inducing cellular transformation. Plays a role in viral genome replication by driving entry of quiescent cells into the cell cycle and by autoregulating the synthesis of viral early mRNA. Displays highly oncogenic activities by corrupting the host cellular checkpoint mechanisms that guard cell division and the transcription, replication, and repair of DNA. Participates in the modulation of cellular gene expression preceeding viral DNA replication. This step involves binding to host key cell cycle regulators retinoblastoma protein RB1/pRb and TP53. Induces the disassembly of host E2F1 transcription factors from RB1, thus promoting transcriptional activation of E2F1-regulated S-phase genes. Inhibits host TP53 binding to DNA, abrogating the ability of TP53 to stimulate gene expression. Plays the role of a TFIID-associated factor (TAF) in transcription initiation for all three RNA polymerases, by stabilizing the TBP-TFIIA complex on promoters. Initiates viral DNA replication and unwinding via interactions with the viral origin of replication. Binds two adjacent sites in the SV40 origin. The replication fork movement is facilitated by Large T antigen helicase activity. Has processive 3'-5' DNA helicase activity which requires a short 3' single-stranded region and ATP. Activates the transcription of viral late mRNA, through host TBP and TFIIA stabilization. Interferes with histone deacetylation mediated by HDAC1, leading to activation of transcription. This chain is Large T antigen, found in Bovine polyomavirus (BPyV).